A 633-amino-acid chain; its full sequence is Probable extracellular metalloproteinase 5 (633 aa).

Residues 1 to 20 (MHGLLLAAAGLLSLPLHVLA) form the signal peptide. The propeptide occupies 21–244 (HPQPSTNLAG…VHNVVDYVSH (224 aa)). An N-linked (GlcNAc...) asparagine glycan is attached at N285. Residue H428 coordinates Zn(2+). E429 is a catalytic residue. H432 lines the Zn(2+) pocket. N-linked (GlcNAc...) asparagine glycans are attached at residues N592 and N621.

It belongs to the peptidase M36 family. The cofactor is Zn(2+).

The protein resides in the secreted. In terms of biological role, secreted metalloproteinase probably acting as a virulence factor. This Arthroderma benhamiae (strain ATCC MYA-4681 / CBS 112371) (Trichophyton mentagrophytes) protein is Probable extracellular metalloproteinase 5 (MEP5).